Consider the following 173-residue polypeptide: Probable DNA-directed RNA polymerase subunit delta (173 aa).

Positions 14-81 constitute an HTH HARE-type domain; sequence LSMIELGVKI…GSGMWGLKRW (68 aa). Positions 86–173 are disordered; sequence QAEEEITEEP…EDENDDDNTR (88 aa). Residues 109–173 show a composition bias toward acidic residues; sequence IDDVDDDLDV…EDENDDDNTR (65 aa).

Belongs to the RpoE family. As to quaternary structure, RNAP is composed of a core of 2 alpha, a beta and a beta' subunits. The core is associated with a delta subunit and one of several sigma factors.

Its function is as follows. Participates in both the initiation and recycling phases of transcription. In the presence of the delta subunit, RNAP displays an increased specificity of transcription, a decreased affinity for nucleic acids, and an increased efficiency of RNA synthesis because of enhanced recycling. This Oceanobacillus iheyensis (strain DSM 14371 / CIP 107618 / JCM 11309 / KCTC 3954 / HTE831) protein is Probable DNA-directed RNA polymerase subunit delta.